We begin with the raw amino-acid sequence, 62 residues long: Large ribosomal subunit protein bL28 (62 aa).

The tract at residues 1–26 is disordered; sequence MARKCYVTGKSPKSGNNRSHALNKTK. The span at 11 to 20 shows a compositional bias: polar residues; that stretch reads SPKSGNNRSH.

Belongs to the bacterial ribosomal protein bL28 family.

This chain is Large ribosomal subunit protein bL28, found in Exiguobacterium sp. (strain ATCC BAA-1283 / AT1b).